The primary structure comprises 335 residues: Tetraacyldisaccharide 4'-kinase (335 aa).

51 to 58 (HVGGAGKT) is a binding site for ATP.

This sequence belongs to the LpxK family.

The catalysed reaction is a lipid A disaccharide + ATP = a lipid IVA + ADP + H(+). The protein operates within glycolipid biosynthesis; lipid IV(A) biosynthesis; lipid IV(A) from (3R)-3-hydroxytetradecanoyl-[acyl-carrier-protein] and UDP-N-acetyl-alpha-D-glucosamine: step 6/6. In terms of biological role, transfers the gamma-phosphate of ATP to the 4'-position of a tetraacyldisaccharide 1-phosphate intermediate (termed DS-1-P) to form tetraacyldisaccharide 1,4'-bis-phosphate (lipid IVA). The polypeptide is Tetraacyldisaccharide 4'-kinase (Bradyrhizobium sp. (strain ORS 278)).